Reading from the N-terminus, the 319-residue chain is Acetyl-coenzyme A carboxylase carboxyl transferase subunit alpha (319 aa).

The region spanning 35-296 (DLDKEIEQLE…KANLLRQLED (262 aa)) is the CoA carboxyltransferase C-terminal domain.

This sequence belongs to the AccA family. In terms of assembly, acetyl-CoA carboxylase is a heterohexamer composed of biotin carboxyl carrier protein (AccB), biotin carboxylase (AccC) and two subunits each of ACCase subunit alpha (AccA) and ACCase subunit beta (AccD).

It is found in the cytoplasm. The enzyme catalyses N(6)-carboxybiotinyl-L-lysyl-[protein] + acetyl-CoA = N(6)-biotinyl-L-lysyl-[protein] + malonyl-CoA. The protein operates within lipid metabolism; malonyl-CoA biosynthesis; malonyl-CoA from acetyl-CoA: step 1/1. Functionally, component of the acetyl coenzyme A carboxylase (ACC) complex. First, biotin carboxylase catalyzes the carboxylation of biotin on its carrier protein (BCCP) and then the CO(2) group is transferred by the carboxyltransferase to acetyl-CoA to form malonyl-CoA. The sequence is that of Acetyl-coenzyme A carboxylase carboxyl transferase subunit alpha from Vibrio campbellii (strain ATCC BAA-1116).